The sequence spans 310 residues: L-lactate dehydrogenase (310 aa).

Positions 11, 32, and 37 each coordinate NAD(+). Residues Gln79, Arg85, and Asn117–Asp120 each bind substrate. NAD(+) contacts are provided by residues Val115–Asn117 and Thr140. Substrate is bound at residue Asp145 to Arg148. The beta-D-fructose 1,6-bisphosphate site is built by Arg150 and His165. His172 functions as the Proton acceptor in the catalytic mechanism. At Tyr221 the chain carries Phosphotyrosine. Thr230 lines the substrate pocket.

Belongs to the LDH/MDH superfamily. LDH family. In terms of assembly, homotetramer.

Its subcellular location is the cytoplasm. It carries out the reaction (S)-lactate + NAD(+) = pyruvate + NADH + H(+). The protein operates within fermentation; pyruvate fermentation to lactate; (S)-lactate from pyruvate: step 1/1. With respect to regulation, allosterically activated by fructose 1,6-bisphosphate (FBP). Functionally, catalyzes the conversion of lactate to pyruvate. The protein is L-lactate dehydrogenase of Fervidobacterium nodosum (strain ATCC 35602 / DSM 5306 / Rt17-B1).